Here is a 539-residue protein sequence, read N- to C-terminus: Kynureninase 2 (539 aa).

The interval 60-87 is disordered; the sequence is DGGVAGETKEPRVPNGVSSATKPNGTVN. Residues 75-87 show a composition bias toward polar residues; it reads GVSSATKPNGTVN. Pyridoxal 5'-phosphate is bound by residues leucine 171, threonine 172, 199-202, aspartate 290, histidine 293, and tyrosine 315; that span reads FPSD. At lysine 316 the chain carries N6-(pyridoxal phosphate)lysine. The span at 340-352 shows a compositional bias: gly residues; that stretch reads GGGGSGGVGGGRG. Residues 340-363 are disordered; it reads GGGGSGGVGGGRGEGGDGDGGDGG. Pyridoxal 5'-phosphate contacts are provided by tryptophan 379 and asparagine 407.

It belongs to the kynureninase family. In terms of assembly, homodimer. It depends on pyridoxal 5'-phosphate as a cofactor.

It localises to the cytoplasm. The enzyme catalyses L-kynurenine + H2O = anthranilate + L-alanine + H(+). It catalyses the reaction 3-hydroxy-L-kynurenine + H2O = 3-hydroxyanthranilate + L-alanine + H(+). The protein operates within amino-acid degradation; L-kynurenine degradation; L-alanine and anthranilate from L-kynurenine: step 1/1. It participates in cofactor biosynthesis; NAD(+) biosynthesis; quinolinate from L-kynurenine: step 2/3. In terms of biological role, catalyzes the cleavage of L-kynurenine (L-Kyn) and L-3-hydroxykynurenine (L-3OHKyn) into anthranilic acid (AA) and 3-hydroxyanthranilic acid (3-OHAA), respectively. In Chaetomium globosum (strain ATCC 6205 / CBS 148.51 / DSM 1962 / NBRC 6347 / NRRL 1970) (Soil fungus), this protein is Kynureninase 2.